Here is a 429-residue protein sequence, read N- to C-terminus: 3-oxo-tetronate kinase (429 aa).

ATP contacts are provided by residues serine 268, 366 to 369 (GGET), and glycine 410.

It belongs to the four-carbon acid sugar kinase family.

The catalysed reaction is 3-dehydro-L-erythronate + ATP = 3-dehydro-4-O-phospho-L-erythronate + ADP + H(+). It carries out the reaction 3-dehydro-D-erythronate + ATP = 3-dehydro-4-O-phospho-D-erythronate + ADP + H(+). In terms of biological role, catalyzes the ATP-dependent phosphorylation of 3-oxo-tetronate to 3-oxo-tetronate 4-phosphate. This Pseudomonas savastanoi pv. phaseolicola (strain 1448A / Race 6) (Pseudomonas syringae pv. phaseolicola (strain 1448A / Race 6)) protein is 3-oxo-tetronate kinase.